The chain runs to 144 residues: Nucleoside diphosphate kinase (144 aa).

Residues lysine 11, phenylalanine 59, arginine 87, threonine 93, arginine 104, and asparagine 114 each coordinate ATP. Histidine 117 serves as the catalytic Pros-phosphohistidine intermediate.

The protein belongs to the NDK family. As to quaternary structure, homotetramer. Mg(2+) is required as a cofactor.

Its subcellular location is the cytoplasm. It carries out the reaction a 2'-deoxyribonucleoside 5'-diphosphate + ATP = a 2'-deoxyribonucleoside 5'-triphosphate + ADP. The enzyme catalyses a ribonucleoside 5'-diphosphate + ATP = a ribonucleoside 5'-triphosphate + ADP. In terms of biological role, major role in the synthesis of nucleoside triphosphates other than ATP. The ATP gamma phosphate is transferred to the NDP beta phosphate via a ping-pong mechanism, using a phosphorylated active-site intermediate. In Sorangium cellulosum (strain So ce56) (Polyangium cellulosum (strain So ce56)), this protein is Nucleoside diphosphate kinase.